The chain runs to 509 residues: Glutamate--tRNA ligase (509 aa).

The 'HIGH' region signature appears at 20-30; it reads PSPTGFPHVGT. Positions 117, 119, 144, and 146 each coordinate Zn(2+). The 'KMSKS' region motif lies at 261–265; sequence KLSKR. Residue K264 coordinates ATP.

Belongs to the class-I aminoacyl-tRNA synthetase family. Glutamate--tRNA ligase type 1 subfamily. As to quaternary structure, monomer. Zn(2+) is required as a cofactor.

The protein localises to the cytoplasm. The catalysed reaction is tRNA(Glu) + L-glutamate + ATP = L-glutamyl-tRNA(Glu) + AMP + diphosphate. Functionally, catalyzes the attachment of glutamate to tRNA(Glu) in a two-step reaction: glutamate is first activated by ATP to form Glu-AMP and then transferred to the acceptor end of tRNA(Glu). The polypeptide is Glutamate--tRNA ligase (Psychrobacter cryohalolentis (strain ATCC BAA-1226 / DSM 17306 / VKM B-2378 / K5)).